We begin with the raw amino-acid sequence, 115 residues long: MKFVLLFGVLLVTLFSYSSAEMLDDFDQADEDELLSLIEKEEARAKECTPRFYDCSHDRHSCCRSELFKDVCTCFYPEGGDNEVCTCQQPKHLKYMEKAADKAKKFGGKIKKWFG.

The first 20 residues, 1–20, serve as a signal peptide directing secretion; it reads MKFVLLFGVLLVTLFSYSSA. A propeptide spanning residues 21-44 is cleaved from the precursor; sequence EMLDDFDQADEDELLSLIEKEEAR. Disulfide bonds link Cys-48-Cys-63, Cys-55-Cys-72, Cys-62-Cys-87, and Cys-74-Cys-85.

Belongs to the neurotoxin 19 (CSTX) family. 01 subfamily. As to expression, expressed by the venom gland.

It localises to the secreted. The chain is U3-lycotoxin-Ls1a from Lycosa singoriensis (Wolf spider).